The primary structure comprises 531 residues: SWI/SNF-related matrix-associated actin-dependent regulator of chromatin subfamily D member 2 (531 aa).

Residues A20–A85 form a disordered region. Positions P34–P45 are enriched in low complexity. R81 and R104 each carry asymmetric dimethylarginine. S203 bears the Phosphoserine mark. Positions S205–K226 are disordered. Positions D210–D225 are enriched in low complexity. Residue T217 is modified to Phosphothreonine. K226 participates in a covalent cross-link: Glycyl lysine isopeptide (Lys-Gly) (interchain with G-Cter in SUMO2). The 78-residue stretch at H306–H383 folds into the SWIB/MDM2 domain.

This sequence belongs to the SMARCD family. In terms of assembly, component of the multiprotein chromatin-remodeling complexes SWI/SNF: SWI/SNF-A (BAF), SWI/SNF-B (PBAF) and related complexes. The canonical complex contains a catalytic subunit (either SMARCA4/BRG1/BAF190A or SMARCA2/BRM/BAF190B), and at least SMARCE1, ACTL6A/BAF53, SMARCC1/BAF155, SMARCC2/BAF170, and SMARCB1/SNF5/BAF47. Other subunits specific to each of the complexes may also be present permitting several possible combinations developmentally and tissue specific. Component of the BAF complex, which includes at least actin (ACTB), ARID1A/BAF250A, ARID1B/BAF250B, SMARCA2/BRM, SMARCA4/BRG1, ACTL6A/BAF53, ACTL6B/BAF53B, SMARCE1/BAF57, SMARCC1/BAF155, SMARCC2/BAF170, SMARCB1/SNF5/INI1, and one or more SMARCD1/BAF60A, SMARCD2/BAF60B, or SMARCD3/BAF60C. In muscle cells, the BAF complex also contains DPF3. Component of the SWI/SNF-B (PBAF) chromatin remodeling complex, at least composed of SMARCA4/BRG1, SMARCB1/BAF47/SNF5, ACTL6A/BAF53A or ACTL6B/BAF53B, SMARCE1/BAF57, SMARCD1/BAF60A, SMARCD2/BAF60B, perhaps SMARCD3/BAF60C, SMARCC1/BAF155, SMARCC2/BAF170, PBRM1/BAF180, ARID2/BAF200 and actin (ACTB). Interacts with UNKL. Interacts with CEBPE. In terms of processing, ubiquitinated through a signaling process involving RAC1 and the RING finger protein UNKL.

It localises to the nucleus. Involved in transcriptional activation and repression of select genes by chromatin remodeling (alteration of DNA-nucleosome topology). Component of SWI/SNF chromatin remodeling complexes that carry out key enzymatic activities, changing chromatin structure by altering DNA-histone contacts within a nucleosome in an ATP-dependent manner. Critical regulator of myeloid differentiation, controlling granulocytopoiesis and the expression of genes involved in neutrophil granule formation. In Mus musculus (Mouse), this protein is SWI/SNF-related matrix-associated actin-dependent regulator of chromatin subfamily D member 2 (Smarcd2).